Reading from the N-terminus, the 548-residue chain is Chaperonin GroEL (548 aa).

ATP is bound by residues Thr-30–Pro-33, Lys-51, Asp-87–Thr-91, Gly-415, Asn-479–Ala-481, and Asp-495.

Belongs to the chaperonin (HSP60) family. As to quaternary structure, forms a cylinder of 14 subunits composed of two heptameric rings stacked back-to-back. Interacts with the co-chaperonin GroES.

It localises to the cytoplasm. It catalyses the reaction ATP + H2O + a folded polypeptide = ADP + phosphate + an unfolded polypeptide.. Functionally, together with its co-chaperonin GroES, plays an essential role in assisting protein folding. The GroEL-GroES system forms a nano-cage that allows encapsulation of the non-native substrate proteins and provides a physical environment optimized to promote and accelerate protein folding. This chain is Chaperonin GroEL, found in Salmonella arizonae (strain ATCC BAA-731 / CDC346-86 / RSK2980).